A 440-amino-acid chain; its full sequence is tRNA modification GTPase MnmE (440 aa).

Residues arginine 22, glutamate 79, and lysine 118 each contribute to the (6S)-5-formyl-5,6,7,8-tetrahydrofolate site. The TrmE-type G domain maps to 214 to 366 (GLIFTILGKP…LKTMLEAEAR (153 aa)). Residues 224–229 (NAGKSS), 243–249 (SSQPGTT), and 268–271 (DTAG) each bind GTP. Serine 228 and threonine 249 together coordinate Mg(2+). Lysine 440 is a (6S)-5-formyl-5,6,7,8-tetrahydrofolate binding site.

This sequence belongs to the TRAFAC class TrmE-Era-EngA-EngB-Septin-like GTPase superfamily. TrmE GTPase family. Homodimer. Heterotetramer of two MnmE and two MnmG subunits. Requires K(+) as cofactor.

It localises to the cytoplasm. In terms of biological role, exhibits a very high intrinsic GTPase hydrolysis rate. Involved in the addition of a carboxymethylaminomethyl (cmnm) group at the wobble position (U34) of certain tRNAs, forming tRNA-cmnm(5)s(2)U34. This chain is tRNA modification GTPase MnmE, found in Granulibacter bethesdensis (strain ATCC BAA-1260 / CGDNIH1).